We begin with the raw amino-acid sequence, 640 residues long: Threonine--tRNA ligase (640 aa).

Residues 224–525 (DHRKLGKELD…LTEHYAGAFP (302 aa)) are catalytic. Residues C323, H374, and H502 each coordinate Zn(2+).

The protein belongs to the class-II aminoacyl-tRNA synthetase family. Homodimer. The cofactor is Zn(2+).

Its subcellular location is the cytoplasm. It catalyses the reaction tRNA(Thr) + L-threonine + ATP = L-threonyl-tRNA(Thr) + AMP + diphosphate + H(+). Catalyzes the attachment of threonine to tRNA(Thr) in a two-step reaction: L-threonine is first activated by ATP to form Thr-AMP and then transferred to the acceptor end of tRNA(Thr). Also edits incorrectly charged L-seryl-tRNA(Thr). This is Threonine--tRNA ligase from Tropheryma whipplei (strain TW08/27) (Whipple's bacillus).